The sequence spans 151 residues: Ribosome maturation factor RimP (151 aa).

The protein belongs to the RimP family.

The protein localises to the cytoplasm. Its function is as follows. Required for maturation of 30S ribosomal subunits. This chain is Ribosome maturation factor RimP, found in Aliivibrio fischeri (strain MJ11) (Vibrio fischeri).